A 302-amino-acid chain; its full sequence is Zygote arrest protein 2.S (302 aa).

Disordered stretches follow at residues 15–46, 88–117, and 138–195; these read YGGN…SEPP, VDTG…PTDC, and LPQG…EPNK. Basic and acidic residues predominate over residues 159-178; that stretch reads LKDRGPSPEEKEPETKEALE. The 3CxxC-type zinc finger occupies 203–288; the sequence is QKYGYFHCKD…QELCGRCKNK (86 aa).

The protein belongs to the ZAR1 family. In terms of tissue distribution, oocyte-specific.

The protein resides in the cytoplasm. The protein localises to the cytoplasmic ribonucleoprotein granule. MRNA-binding protein required for maternal mRNA storage, translation and degradation during oocyte maturation. Probably promotes formation of some phase-separated membraneless compartment that stores maternal mRNAs in oocytes: acts by undergoing liquid-liquid phase separation upon binding to maternal mRNAs. Binds to the 3'-UTR of maternal mRNAs, inhibiting their translation. This is Zygote arrest protein 2.S from Xenopus laevis (African clawed frog).